The sequence spans 54 residues: VATVDCSDYPKPACTLEYMPLCGSDNKTYGNRCNFCNAVVDSNGTLTLSHFGKC.

Positions 4–54 (VDCSDYPKPACTLEYMPLCGSDNKTYGNRCNFCNAVVDSNGTLTLSHFGKC) constitute a Kazal-like domain. 3 cysteine pairs are disulfide-bonded: Cys6–Cys36, Cys14–Cys33, and Cys22–Cys54. Asn43 is a glycosylation site (N-linked (GlcNAc...) asparagine).

The protein localises to the secreted. The chain is Ovomucoid from Dendrocygna viduata (White-faced whistling-duck).